The chain runs to 261 residues: Bcl-2-binding component 3, isoforms 3/4 (261 aa).

The segment at 27–261 (QICGPRERHG…ASAGDFLCTM (235 aa)) is disordered. Residues 40-50 (PGGQLPGARRG) are compositionally biased toward low complexity. Positions 53-63 (PRRPAPLPARP) are enriched in pro residues. Residues 64–73 (PGALGSVLRP) are compositionally biased toward low complexity. Basic residues-rich tracts occupy residues 74–87 (LRAR…RPHP) and 95–106 (RPHRPTRRHRRP). A compositionally biased stretch (low complexity) spans 124 to 146 (PGRSSALALAGGAAPGVARAQRP). Residues 147-171 (GGSGGRSHPGGPGSPRGGGTVGPGD) are compositionally biased toward gly residues. Over residues 172–197 (RGPAAADGGRPQRTVRAAETRGAAAA) the composition is skewed to low complexity.

Does not interact with BCL2.

Does not affect cell growth. This is Bcl-2-binding component 3, isoforms 3/4 (BBC3) from Homo sapiens (Human).